The primary structure comprises 296 residues: GTPase Era (296 aa).

Residues 2–171 form the Era-type G domain; sequence KAGFIAVVGR…LEALDPYLED (170 aa). The tract at residues 10–17 is G1; it reads GRPNVGKS. 10-17 contributes to the GTP binding site; that stretch reads GRPNVGKS. A G2 region spans residues 36–40; the sequence is GTTRD. The tract at residues 57 to 60 is G3; it reads DTPG. Residues 57-61 and 120-123 each bind GTP; these read DTPGI and NKVD. Residues 120-123 are G4; that stretch reads NKVD. Positions 150–152 are G5; it reads ASG. Residues 202–279 enclose the KH type-2 domain; the sequence is TRDEIPHSVA…YLGLWVKVKD (78 aa).

Belongs to the TRAFAC class TrmE-Era-EngA-EngB-Septin-like GTPase superfamily. Era GTPase family. As to quaternary structure, monomer.

The protein resides in the cytoplasm. Its subcellular location is the cell inner membrane. Functionally, an essential GTPase that binds both GDP and GTP, with rapid nucleotide exchange. Plays a role in 16S rRNA processing and 30S ribosomal subunit biogenesis and possibly also in cell cycle regulation and energy metabolism. This Fusobacterium nucleatum subsp. nucleatum (strain ATCC 25586 / DSM 15643 / BCRC 10681 / CIP 101130 / JCM 8532 / KCTC 2640 / LMG 13131 / VPI 4355) protein is GTPase Era.